Reading from the N-terminus, the 639-residue chain is ATP-dependent zinc metalloprotease FtsH (639 aa).

The Cytoplasmic segment spans residues 1–4 (MNST). Residues 5 to 25 (VKTIVFWVFILACCILLWQVF) traverse the membrane as a helical segment. Residues 26-104 (QRSSNTGKEQ…TVKDNSGSPW (79 aa)) are Periplasmic-facing. The helical transmembrane segment at 105-125 (WSILIQFSPVLVLVALWFFMI) threads the bilayer. At 126-639 (RQMQSGGNKA…GLPEGSPSPA (514 aa)) the chain is on the cytoplasmic side. An ATP-binding site is contributed by 196 to 203 (GPPGTGKT). His-418 lines the Zn(2+) pocket. The active site involves Glu-419. 2 residues coordinate Zn(2+): His-422 and Asp-494. The disordered stretch occupies residues 597 to 639 (KDLPPLKPSGGSGTATTDDVQQVLKPSSDRGAGGLPEGSPSPA).

The protein in the central section; belongs to the AAA ATPase family. It in the C-terminal section; belongs to the peptidase M41 family. As to quaternary structure, homohexamer. The cofactor is Zn(2+).

The protein resides in the cell inner membrane. Functionally, acts as a processive, ATP-dependent zinc metallopeptidase for both cytoplasmic and membrane proteins. Plays a role in the quality control of integral membrane proteins. This Acidobacterium capsulatum (strain ATCC 51196 / DSM 11244 / BCRC 80197 / JCM 7670 / NBRC 15755 / NCIMB 13165 / 161) protein is ATP-dependent zinc metalloprotease FtsH.